Here is a 272-residue protein sequence, read N- to C-terminus: Undecaprenyl-diphosphatase (272 aa).

The next 7 membrane-spanning stretches (helical) occupy residues 42–62, 92–112, 120–140, 149–169, 194–214, 224–244, and 252–272; these read FGLS…VVFF, YLVL…EDFF, WVVV…EAVG, MGFA…VPGV, FLMS…EVLA, MFAV…RFFI, and LRAF…LLLL.

It belongs to the UppP family.

It is found in the cell membrane. It catalyses the reaction di-trans,octa-cis-undecaprenyl diphosphate + H2O = di-trans,octa-cis-undecaprenyl phosphate + phosphate + H(+). Its function is as follows. Catalyzes the dephosphorylation of undecaprenyl diphosphate (UPP). Confers resistance to bacitracin. This chain is Undecaprenyl-diphosphatase, found in Rubrobacter xylanophilus (strain DSM 9941 / JCM 11954 / NBRC 16129 / PRD-1).